Reading from the N-terminus, the 503-residue chain is Mitogen-activated protein kinase kinae mkk2 (503 aa).

Positions 1–130 are disordered; it reads MSSSPVPLLR…ASGPASASSS (130 aa). A compositionally biased stretch (pro residues) spans 53-66; sequence APQPQRPSTRPAPP. Over residues 100-115 the composition is skewed to polar residues; that stretch reads TGLNESTGHSRSSSFT. The span at 121 to 130 shows a compositional bias: low complexity; the sequence is ASGPASASSS. One can recognise a Protein kinase domain in the interval 211 to 481; it reads IIELGSLGEG…PWRMLEHPWM (271 aa). ATP contacts are provided by residues 217 to 225 and Lys240; that span reads LGEGAGGAV. The Proton acceptor role is filled by Asp338.

The protein belongs to the protein kinase superfamily. STE Ser/Thr protein kinase family. MAP kinase kinase subfamily.

It catalyses the reaction L-seryl-[protein] + ATP = O-phospho-L-seryl-[protein] + ADP + H(+). The enzyme catalyses L-threonyl-[protein] + ATP = O-phospho-L-threonyl-[protein] + ADP + H(+). Mitogen-activated kinase kinase (MAPKK), part of the cell wall integrity (CWI) signaling pathway composed by three protein kinases bck1, mkk2 and mpkA and responsible for the maintaining of cell-wall integrity balance. The CWI pathway also regulates the oxidative stress response, as well as the production of some secondary metabolites including pyomelanin. The chain is Mitogen-activated protein kinase kinae mkk2 from Aspergillus fumigatus (strain CBS 144.89 / FGSC A1163 / CEA10) (Neosartorya fumigata).